The sequence spans 320 residues: Ferrochelatase (320 aa).

2 residues coordinate Fe cation: histidine 194 and glutamate 275.

The protein belongs to the ferrochelatase family. In terms of assembly, monomer.

Its subcellular location is the cytoplasm. It catalyses the reaction heme b + 2 H(+) = protoporphyrin IX + Fe(2+). It participates in porphyrin-containing compound metabolism; protoheme biosynthesis; protoheme from protoporphyrin-IX: step 1/1. Its function is as follows. Catalyzes the ferrous insertion into protoporphyrin IX. The protein is Ferrochelatase of Shigella dysenteriae serotype 1 (strain Sd197).